Consider the following 232-residue polypeptide: RNA chaperone ProQ (232 aa).

The interval 105–182 (EAKARVQAQR…REEQHTPVSD (78 aa)) is disordered. Basic and acidic residues predominate over residues 117-136 (QQAKKREAAAAAGEKEDAPR). Positions 137 to 146 (RERKPRPTTP) are enriched in basic residues. The segment covering 147–177 (RRKEGAERKPRAQKPVEKAPKTVKAPREEQH) has biased composition (basic and acidic residues).

This sequence belongs to the ProQ family.

The protein localises to the cytoplasm. RNA chaperone with significant RNA binding, RNA strand exchange and RNA duplexing activities. May regulate ProP activity through an RNA-based, post-transcriptional mechanism. The sequence is that of RNA chaperone ProQ from Escherichia coli (strain ATCC 8739 / DSM 1576 / NBRC 3972 / NCIMB 8545 / WDCM 00012 / Crooks).